Reading from the N-terminus, the 172-residue chain is Urease accessory protein UreE (172 aa).

This sequence belongs to the UreE family.

It localises to the cytoplasm. Involved in urease metallocenter assembly. Binds nickel. Probably functions as a nickel donor during metallocenter assembly. In Shewanella halifaxensis (strain HAW-EB4), this protein is Urease accessory protein UreE.